The chain runs to 467 residues: Glutamate--tRNA ligase (467 aa).

Positions 15-25 match the 'HIGH' region motif; that stretch reads PSPTGYLHVGG. Positions 249-253 match the 'KMSKS' region motif; it reads KLSKR. Position 252 (K252) interacts with ATP.

This sequence belongs to the class-I aminoacyl-tRNA synthetase family. Glutamate--tRNA ligase type 1 subfamily. In terms of assembly, monomer.

It localises to the cytoplasm. The catalysed reaction is tRNA(Glu) + L-glutamate + ATP = L-glutamyl-tRNA(Glu) + AMP + diphosphate. Catalyzes the attachment of glutamate to tRNA(Glu) in a two-step reaction: glutamate is first activated by ATP to form Glu-AMP and then transferred to the acceptor end of tRNA(Glu). In Coprothermobacter proteolyticus (strain ATCC 35245 / DSM 5265 / OCM 4 / BT), this protein is Glutamate--tRNA ligase.